A 313-amino-acid chain; its full sequence is Probable inactive peptidyl-prolyl cis-trans isomerase-like 6 (313 aa).

In terms of domain architecture, PPIase cyclophilin-type spans 147-310 (YLDICIDLSP…LLCSIADSGV (164 aa)).

It belongs to the cyclophilin-type PPIase family.

Probable inactive PPIase with no peptidyl-prolyl cis-trans isomerase activity. The polypeptide is Probable inactive peptidyl-prolyl cis-trans isomerase-like 6 (Mus musculus (Mouse)).